The chain runs to 649 residues: MAGVSFSGHRLELLAAYEEVIREESAADWALYTYEDGSDDLKLAASGEGGLQELSGHFENQKVMYGFCSVKDSQAALPKYVLINWVGEDVPDARKCACASHVAKVAEFFQGVDVIVNASSVEDIDAGAIGQRLSNGLARLSSPVLHRLRLREDENAEPVGTTYQKTDAAVEMKRINREQFWEQAKKEEELRKEEERKKALDERLRFEQERMEQERQEQEERERRYREREQQIEEHRRKQQTLEAEEAKRRLKEQSIFGDHRDEEEETHMKKSESEVEEAAAIIAQRPDNPREFFKQQERVASASAGSCDVPSPFNHRPGSHLDSHRRMAPTPIPTRSPSDSSTASTPVAEQIERALDEVTSSQPPPLPPPPPPAQETQEPSPILDSEETRAAAPQAWAGPMEEPPQAQAPPRGPGSPAEDLMFMESAEQAVLAAPVEPATADATEIHDAADTIETDTATADTTVANNVPPAATSLIDLWPGNGEGASTLQGEPRAPTPPSGTEVTLAEVPLLDEVAPEPLLPAGEGCATLLNFDELPEPPATFCDPEEVEGESLAAPQTPTLPSALEELEQEQEPEPHLLTNGETTQKEGTQASEGYFSQSQEEEFAQSEELCAKAPPPVFYNKPPEIDITCWDADPVPEEEEGFEGGD.

Alanine 2 carries the N-acetylalanine modification. Residues 3 to 134 (GVSFSGHRLE…DAGAIGQRLS (132 aa)) form the ADF-H domain. A phosphoserine mark is found at serine 141 and serine 142. Basic and acidic residues-rich tracts occupy residues 208-236 (QERM…EEHR) and 288-298 (DNPREFFKQQE). Disordered regions lie at residues 208–420 (QERM…PAED), 477–502 (DLWP…PSGT), and 538–620 (EPPA…PPPV). Residues threonine 331 and threonine 335 each carry the phosphothreonine modification. A compositionally biased stretch (polar residues) spans 334–348 (PTRSPSDSSTASTPV). Residues serine 337, serine 339, and serine 345 each carry the phosphoserine modification. Position 346 is a phosphothreonine (threonine 346). A compositionally biased stretch (pro residues) spans 363 to 374 (QPPPLPPPPPPA). At serine 416 the chain carries Phosphoserine. The residue at position 497 (threonine 497) is a Phosphothreonine. Residues 582 to 594 (NGETTQKEGTQAS) show a composition bias toward polar residues. A Phosphoserine modification is found at serine 601.

In terms of assembly, interacts with RUFY3. Interacts with CXCR4; this interaction is enhanced by antigenic stimulation. Interacts (via ADF-H domain) with ZMYND8 (via N-terminus); the interaction leads to sequestering of ZMYND8 in the cytoplasm. As to expression, expressed in the brain, with expression in the molecular layer of the dentate gyrus, stratum pyramidale, and stratum radiatum of the hippocampus (at protein level). Also expressed in the terminal varicosities distributed along dendritic trees of pyramidal cells in CA4 and CA3 of the hippocampus (at protein level). Expressed in pyramidal cells in CA2, CA1 and the subiculum of the hippocampus (at protein level). Expressed in peripheral blood lymphocytes, including T-cells (at protein level). Expressed in the brain. Expressed in the heart, placenta, lung, skeletal muscle, kidney, pancreas, skin fibroblasts, gingival fibroblasts and bone-derived cells.

It localises to the cytoplasm. It is found in the cell projection. The protein localises to the dendrite. Its subcellular location is the cell cortex. The protein resides in the cell junction. It localises to the growth cone. Functionally, actin cytoskeleton-organizing protein that plays a role in the formation of cell projections. Required for actin polymerization at immunological synapses (IS) and for the recruitment of the chemokine receptor CXCR4 to IS. Plays a role in dendritic spine morphogenesis and organization, including the localization of the dopamine receptor DRD1 to the dendritic spines. Involved in memory-related synaptic plasticity in the hippocampus. The protein is Drebrin (DBN1) of Homo sapiens (Human).